Consider the following 1370-residue polypeptide: DNA-directed RNA polymerase subunit beta (1370 aa).

This sequence belongs to the RNA polymerase beta chain family. In terms of assembly, the RNAP catalytic core consists of 2 alpha, 1 beta, 1 beta' and 1 omega subunit. When a sigma factor is associated with the core the holoenzyme is formed, which can initiate transcription.

It catalyses the reaction RNA(n) + a ribonucleoside 5'-triphosphate = RNA(n+1) + diphosphate. Functionally, DNA-dependent RNA polymerase catalyzes the transcription of DNA into RNA using the four ribonucleoside triphosphates as substrates. The protein is DNA-directed RNA polymerase subunit beta of Geobacter metallireducens (strain ATCC 53774 / DSM 7210 / GS-15).